Reading from the N-terminus, the 541-residue chain is 5' exonuclease Apollo (541 aa).

Lys-334 participates in a covalent cross-link: Glycyl lysine isopeptide (Lys-Gly) (interchain with G-Cter in SUMO2). The disordered stretch occupies residues Pro-455–Gly-475. The TBM signature appears at Glu-492–Phe-507.

Belongs to the DNA repair metallo-beta-lactamase (DRMBL) family. As to quaternary structure, interacts with MUS81, MRE11 and FANCD2. Interacts with HSPA2, HSPA8 and HSPA14. Interacts with SPAG5. Interacts with TERF2; the interaction is direct. In terms of processing, ubiquitinated, leading to its degradation. Interaction with TERF2 protects it from ubiquitination.

Its subcellular location is the chromosome. It is found in the telomere. The protein localises to the nucleus. It localises to the cytoplasm. The protein resides in the cytoskeleton. Its subcellular location is the microtubule organizing center. It is found in the centrosome. The enzyme catalyses a beta-lactam + H2O = a substituted beta-amino acid. Its function is as follows. 5'-3' exonuclease that plays a central role in telomere maintenance and protection during S-phase. Participates in the protection of telomeres against non-homologous end-joining (NHEJ)-mediated repair, thereby ensuring that telomeres do not fuse. Plays a key role in telomeric loop (T loop) formation by being recruited by TERF2 at the leading end telomeres and by processing leading-end telomeres immediately after their replication via its exonuclease activity: generates 3' single-stranded overhang at the leading end telomeres avoiding blunt leading-end telomeres that are vulnerable to end-joining reactions and expose the telomere end in a manner that activates the DNA repair pathways. Together with TERF2, required to protect telomeres from replicative damage during replication by controlling the amount of DNA topoisomerase (TOP1, TOP2A and TOP2B) needed for telomere replication during fork passage and prevent aberrant telomere topology. Also involved in response to DNA damage: plays a role in response to DNA interstrand cross-links (ICLs) by facilitating double-strand break formation. In case of spindle stress, involved in prophase checkpoint. Possesses beta-lactamase activity, catalyzing the hydrolysis of penicillin G and nitrocefin. Exhibits no activity towards other beta-lactam antibiotic classes including cephalosporins (cefotaxime) and carbapenems (imipenem). This chain is 5' exonuclease Apollo (Dclre1b), found in Mus musculus (Mouse).